The primary structure comprises 414 residues: Esterase FrsA (414 aa).

Belongs to the FrsA family.

It carries out the reaction a carboxylic ester + H2O = an alcohol + a carboxylate + H(+). Catalyzes the hydrolysis of esters. The sequence is that of Esterase FrsA from Klebsiella pneumoniae subsp. pneumoniae (strain ATCC 700721 / MGH 78578).